The chain runs to 312 residues: Malate dehydrogenase (312 aa).

NAD(+) is bound by residues 12 to 17 (GAGFTG) and aspartate 36. Residues arginine 87 and arginine 93 each coordinate substrate. NAD(+)-binding positions include asparagine 100 and 123–125 (LTN). Asparagine 125 provides a ligand contact to substrate. Serine 149 carries the post-translational modification Phosphoserine. Arginine 156 is a binding site for substrate. The Proton acceptor role is filled by histidine 180.

Belongs to the LDH/MDH superfamily. MDH type 3 family.

It catalyses the reaction (S)-malate + NAD(+) = oxaloacetate + NADH + H(+). In terms of biological role, catalyzes the reversible oxidation of malate to oxaloacetate. This is Malate dehydrogenase from Geobacillus kaustophilus (strain HTA426).